The following is a 41-amino-acid chain: Photosystem I reaction center subunit IX (41 aa).

A helical transmembrane segment spans residues 7–27; sequence YLSTAPVLTLVSLTAVAGLLI.

Belongs to the PsaJ family.

The protein resides in the plastid. Its subcellular location is the chloroplast thylakoid membrane. In terms of biological role, may help in the organization of the PsaE and PsaF subunits. In Chlorella vulgaris (Green alga), this protein is Photosystem I reaction center subunit IX.